The chain runs to 203 residues: Inactive ribonuclease-like protein 9 (203 aa).

Residues 1–25 (MRTPITTHSLLLLLLLQQLLQPVQL) form the signal peptide. 3 cysteine pairs are disulfide-bonded: C96–C151, C114–C166, and C121–C128. 2 N-linked (GlcNAc...) asparagine glycosylation sites follow: N129 and N141.

The protein belongs to the pancreatic ribonuclease family.

It localises to the secreted. Does not exhibit any ribonuclease activity. The chain is Inactive ribonuclease-like protein 9 (RNASE9) from Macaca assamensis (Assam macaque).